A 164-amino-acid polypeptide reads, in one-letter code: MEMTNAQRLILSNQYKMMTMLDPTNAERYRRLQTIIERGYGLQMRELDREFGELTEETCRTIIDIMEMYHALHVSWTNLKDTQAIDERRVTFLGFDAATEARYLGYVRFMVNIEGRYTHFDAGTHGFNAQTPMWEKYQRMLNVWHACPRQYHLSANEINQIINA.

This sequence belongs to the UPF0304 family.

The sequence is that of UPF0304 protein YfbU from Salmonella enteritidis PT4 (strain P125109).